We begin with the raw amino-acid sequence, 312 residues long: DNA-directed RNA polymerase subunit alpha (312 aa).

Residues 1 to 227 form an alpha N-terminal domain (alpha-NTD) region; sequence MNNFYIKCLK…SFFSSLLENK (227 aa). Residues 243–312 are alpha C-terminal domain (alpha-CTD); it reads PKNPHTNIAI…KNKLGIVLSN (70 aa).

It belongs to the RNA polymerase alpha chain family. As to quaternary structure, in plastids the minimal PEP RNA polymerase catalytic core is composed of four subunits: alpha, beta, beta', and beta''. When a (nuclear-encoded) sigma factor is associated with the core the holoenzyme is formed, which can initiate transcription.

It is found in the plastid. Its subcellular location is the chloroplast. The enzyme catalyses RNA(n) + a ribonucleoside 5'-triphosphate = RNA(n+1) + diphosphate. Functionally, DNA-dependent RNA polymerase catalyzes the transcription of DNA into RNA using the four ribonucleoside triphosphates as substrates. The polypeptide is DNA-directed RNA polymerase subunit alpha (Trieres chinensis (Marine centric diatom)).